A 127-amino-acid chain; its full sequence is MLFYKPVMRMAVRPLKSIRFQSSYTSITKLTNLTEFRNLIKQNDKLVIDFYATWCGPCKMMQPHLTKLIQAYPDVRFVKCDVDESPDIAKECEVTAMPTFVLGKDGQLIGKIIGANPTALEKGIKDL.

The N-terminal 21 residues, 1–21, are a transit peptide targeting the mitochondrion; the sequence is MLFYKPVMRMAVRPLKSIRFQ. Positions 22 to 127 constitute a Thioredoxin domain; it reads SSYTSITKLT…TALEKGIKDL (106 aa). Catalysis depends on nucleophile residues C55 and C58. C55 and C58 are disulfide-bonded.

This sequence belongs to the thioredoxin family.

Its subcellular location is the mitochondrion. The protein is Thioredoxin-3, mitochondrial (TRX3) of Saccharomyces cerevisiae (strain ATCC 204508 / S288c) (Baker's yeast).